The chain runs to 502 residues: Maturase K (502 aa).

Belongs to the intron maturase 2 family. MatK subfamily.

It localises to the plastid. It is found in the chloroplast. Usually encoded in the trnK tRNA gene intron. Probably assists in splicing its own and other chloroplast group II introns. The sequence is that of Maturase K from Brassica oleracea (Wild cabbage).